The following is a 466-amino-acid chain: Ras-GEF domain-containing family member 1C (466 aa).

The segment covering 1-23 (MPQTLSASDMVTPGSLSPPTTEP) has biased composition (polar residues). Disordered regions lie at residues 1–35 (MPQTLSASDMVTPGSLSPPTTEPTDGEQAGQPLLD) and 443–466 (SESPENQTEKERWKSLRSSILGKT). Residues 34–164 (LDGAPSSASL…LLQALHQKLA (131 aa)) enclose the N-terminal Ras-GEF domain. Residues 200-446 (DPYTLAQQLT…YLASYESESP (247 aa)) enclose the Ras-GEF domain.

Functionally, guanine nucleotide exchange factor (GEF). In Macaca fascicularis (Crab-eating macaque), this protein is Ras-GEF domain-containing family member 1C (RASGEF1C).